We begin with the raw amino-acid sequence, 287 residues long: Proteasome subunit alpha (287 aa).

The interval 241 to 287 (GVVAGEEPHTAAHAPSVPQPGAPAGLGDPGAPDTGGTAGSGGEAPTT) is disordered. The span at 262 to 275 (APAGLGDPGAPDTG) shows a compositional bias: low complexity. Gly residues predominate over residues 276-287 (GTAGSGGEAPTT).

This sequence belongs to the peptidase T1A family. As to quaternary structure, the 20S proteasome core is composed of 14 alpha and 14 beta subunits that assemble into four stacked heptameric rings, resulting in a barrel-shaped structure. The two inner rings, each composed of seven catalytic beta subunits, are sandwiched by two outer rings, each composed of seven alpha subunits. The catalytic chamber with the active sites is on the inside of the barrel. Has a gated structure, the ends of the cylinder being occluded by the N-termini of the alpha-subunits. Is capped by the proteasome-associated ATPase, ARC.

It localises to the cytoplasm. The protein operates within protein degradation; proteasomal Pup-dependent pathway. With respect to regulation, the formation of the proteasomal ATPase ARC-20S proteasome complex, likely via the docking of the C-termini of ARC into the intersubunit pockets in the alpha-rings, may trigger opening of the gate for substrate entry. Interconversion between the open-gate and close-gate conformations leads to a dynamic regulation of the 20S proteasome proteolysis activity. Functionally, component of the proteasome core, a large protease complex with broad specificity involved in protein degradation. The chain is Proteasome subunit alpha from Geodermatophilus obscurus (strain ATCC 25078 / DSM 43160 / JCM 3152 / CCUG 61914 / KCC A-0152 / KCTC 9177 / NBRC 13315 / NRRL B-3577 / G-20).